Consider the following 223-residue polypeptide: UPF0502 protein Shew185_1758 (223 aa).

Belongs to the UPF0502 family.

The protein is UPF0502 protein Shew185_1758 of Shewanella baltica (strain OS185).